The sequence spans 603 residues: Geraniol synthase Tps-5073G30, chloroplastic (603 aa).

The N-terminal 35 residues, 1-35, are a transit peptide targeting the chloroplast; sequence MCSISQKVVIGLNKAAANNNLQNLDRRGFKTRCVS. The (2E)-geranyl diphosphate site is built by arginine 319, aspartate 356, aspartate 360, arginine 497, and aspartate 500. Mg(2+) contacts are provided by aspartate 356 and aspartate 360. A DDXXD motif motif is present at residues 356–360; the sequence is DDVYD. Residues aspartate 500, threonine 504, and glutamate 508 each coordinate Mg(2+).

The protein belongs to the terpene synthase family. Tpsb subfamily. Monomer. Mg(2+) serves as cofactor. The cofactor is Mn(2+).

Its subcellular location is the plastid. It is found in the chloroplast. It catalyses the reaction (2E)-geranyl diphosphate + H2O = (2E)-geraniol + diphosphate. Its pathway is secondary metabolite biosynthesis; terpenoid biosynthesis. Functionally, monoterpene synthase (mono-TPS) involved in the biosynthesis of monoterpenes natural products. Catalyzes the conversion of (2E)-geranyl diphosphate (GPP) into geraniol. In Perilla frutescens (Beefsteak mint), this protein is Geraniol synthase Tps-5073G30, chloroplastic.